A 380-amino-acid chain; its full sequence is Probable tRNA sulfurtransferase (380 aa).

A THUMP domain is found at 58–162 (EEVIERLKKV…MAFVYAGVIE (105 aa)). Residues 178–179 (LL), 203–204 (YF), R260, G282, and Q291 each bind ATP.

This sequence belongs to the ThiI family.

Its subcellular location is the cytoplasm. It carries out the reaction [ThiI sulfur-carrier protein]-S-sulfanyl-L-cysteine + a uridine in tRNA + 2 reduced [2Fe-2S]-[ferredoxin] + ATP + H(+) = [ThiI sulfur-carrier protein]-L-cysteine + a 4-thiouridine in tRNA + 2 oxidized [2Fe-2S]-[ferredoxin] + AMP + diphosphate. The catalysed reaction is [ThiS sulfur-carrier protein]-C-terminal Gly-Gly-AMP + S-sulfanyl-L-cysteinyl-[cysteine desulfurase] + AH2 = [ThiS sulfur-carrier protein]-C-terminal-Gly-aminoethanethioate + L-cysteinyl-[cysteine desulfurase] + A + AMP + 2 H(+). The protein operates within cofactor biosynthesis; thiamine diphosphate biosynthesis. In terms of biological role, catalyzes the ATP-dependent transfer of a sulfur to tRNA to produce 4-thiouridine in position 8 of tRNAs, which functions as a near-UV photosensor. Also catalyzes the transfer of sulfur to the sulfur carrier protein ThiS, forming ThiS-thiocarboxylate. This is a step in the synthesis of thiazole, in the thiamine biosynthesis pathway. The sulfur is donated as persulfide by IscS. In Thermoanaerobacter sp. (strain X514), this protein is Probable tRNA sulfurtransferase.